The chain runs to 727 residues: MSVLPDRQVINQLISGHYGDPFSILGMHETSQGLQICALLPDAREVWLVETENGRRIAQLTLEDPRGFFIAQLTRRKKSFRYQFAVTWQENPQIIEDPYRFGPLLQDIDSWLLAEGTHLRPYERLGAHLMSLDGVSGVSFAVWAPNAQRVSVVGDFNFWDGRRHPMRLRRENGIWELFLPGIEAGQLYKFEIIDCHGQVRLKADPYAFEAQMRPETASLISPLPDVVKSSAARQKANDLCSPVSIYEVHLGSWRRHTDNNFWLSYRELADQLVEYVKYMGFTHVELLPINEHPFDGSWGYQPLGLYAPTRRYGTPEDFKAFVAKFHQAGINVILDWVPGHFPSDEHGLSTFDGTALYEYADPREGYHQDWNTLIYNYGRNEVRNYLAGNAFYWMERFGIDALRIDAVASMIYRDYSRAEGQWVPNYYGGRENLEAIAFLRYTNKTIGVERPGSVTMAEESTDFPGVTLPPDIGGLGFNYKWNMGWMHDTLNYMQCDPVHRKYHHNLMTFGMLYAYTENFILPLSHDEVVHGKRSILDRMPGDAWQKFANLRAYYAFMWAHPGKKLLFMGCEFAQGREWNFETSLDWHLLDDENGWHSGVQRLVRDLNHCYRQYAPLYEWDYQPAGFEWLVVDDHENSVFAFLRRDAEGHELIAISNFTPVPRYHYRVGIPQGGHYREVLNSDSAFYCGSNLGNQGGIDSHHVRSHNHEHSLLLTLPPLATIYLLREN.

Asp405 acts as the Nucleophile in catalysis. Glu458 serves as the catalytic Proton donor.

Belongs to the glycosyl hydrolase 13 family. GlgB subfamily. As to quaternary structure, monomer.

The enzyme catalyses Transfers a segment of a (1-&gt;4)-alpha-D-glucan chain to a primary hydroxy group in a similar glucan chain.. It participates in glycan biosynthesis; glycogen biosynthesis. In terms of biological role, catalyzes the formation of the alpha-1,6-glucosidic linkages in glycogen by scission of a 1,4-alpha-linked oligosaccharide from growing alpha-1,4-glucan chains and the subsequent attachment of the oligosaccharide to the alpha-1,6 position. In Yersinia pestis bv. Antiqua (strain Antiqua), this protein is 1,4-alpha-glucan branching enzyme GlgB.